The sequence spans 231 residues: Endonuclease NucS (231 aa).

It belongs to the NucS endonuclease family.

It localises to the cytoplasm. In terms of biological role, cleaves both 3' and 5' ssDNA extremities of branched DNA structures. The polypeptide is Endonuclease NucS (Micrococcus luteus (strain ATCC 4698 / DSM 20030 / JCM 1464 / CCM 169 / CCUG 5858 / IAM 1056 / NBRC 3333 / NCIMB 9278 / NCTC 2665 / VKM Ac-2230) (Micrococcus lysodeikticus)).